Here is a 367-residue protein sequence, read N- to C-terminus: MKTSPHRNTSAIVDLKAIRNNIEKFKKHINPNAEIWPAVKADAYGHGSIEVSKAVSDLVGGFCVSNLDEAIELRNHLVTKPILVLSGIVPEDVDIAAALNISLTAPSLEWLKLVVQEEAELSDLKIHIGVDSGMGRIGIRDVEEANQMIELADKYAINFEGIFTHFATADMADETKFKNQQARFNKIMAGLSRQPKFIHSTNTAAALWHKEQVQAIERLGISMYGLNPSGKTLELPFEIEPALSLVSELTHIKKIAAGETVGYGATYETSEETWIGTVPIGYADGWTRQMQGFKVLVDGKFCEIVGRVCMDQMMIKLDKSYPLGTKVTLIGRDKANEITTTDVADWRGTINYEVLCLLSDRIKRIYK.

Lys-40 functions as the Proton acceptor; specific for D-alanine in the catalytic mechanism. Lys-40 is modified (N6-(pyridoxal phosphate)lysine). Arg-136 serves as a coordination point for substrate. Tyr-263 serves as the catalytic Proton acceptor; specific for L-alanine. Position 310 (Met-310) interacts with substrate.

This sequence belongs to the alanine racemase family. The cofactor is pyridoxal 5'-phosphate.

It catalyses the reaction L-alanine = D-alanine. It functions in the pathway amino-acid biosynthesis; D-alanine biosynthesis; D-alanine from L-alanine: step 1/1. Its function is as follows. Catalyzes the interconversion of L-alanine and D-alanine. May also act on other amino acids. This chain is Alanine racemase (alr), found in Lactococcus lactis subsp. cremoris (strain MG1363).